A 73-amino-acid polypeptide reads, in one-letter code: UPF0150 protein ssl0259 (73 aa).

Belongs to the UPF0150 family.

This Synechocystis sp. (strain ATCC 27184 / PCC 6803 / Kazusa) protein is UPF0150 protein ssl0259.